We begin with the raw amino-acid sequence, 400 residues long: Nicotinate phosphoribosyltransferase (400 aa).

At histidine 220 the chain carries Phosphohistidine; by autocatalysis.

Belongs to the NAPRTase family. In terms of processing, transiently phosphorylated on a His residue during the reaction cycle. Phosphorylation strongly increases the affinity for substrates and increases the rate of nicotinate D-ribonucleotide production. Dephosphorylation regenerates the low-affinity form of the enzyme, leading to product release.

The catalysed reaction is nicotinate + 5-phospho-alpha-D-ribose 1-diphosphate + ATP + H2O = nicotinate beta-D-ribonucleotide + ADP + phosphate + diphosphate. The protein operates within cofactor biosynthesis; NAD(+) biosynthesis; nicotinate D-ribonucleotide from nicotinate: step 1/1. Catalyzes the synthesis of beta-nicotinate D-ribonucleotide from nicotinate and 5-phospho-D-ribose 1-phosphate at the expense of ATP. The chain is Nicotinate phosphoribosyltransferase from Salmonella schwarzengrund (strain CVM19633).